Consider the following 168-residue polypeptide: Phosphopantetheine adenylyltransferase (168 aa).

A substrate-binding site is contributed by Thr9. Residues 9–10 and His17 each bind ATP; that span reads TF. Substrate is bound by residues Lys41, Leu73, and Arg87. ATP-binding positions include 88–90, Glu98, and 123–129; these read GLR and YQFISGT.

Belongs to the bacterial CoaD family. Homohexamer. It depends on Mg(2+) as a cofactor.

The protein resides in the cytoplasm. It catalyses the reaction (R)-4'-phosphopantetheine + ATP + H(+) = 3'-dephospho-CoA + diphosphate. Its pathway is cofactor biosynthesis; coenzyme A biosynthesis; CoA from (R)-pantothenate: step 4/5. In terms of biological role, reversibly transfers an adenylyl group from ATP to 4'-phosphopantetheine, yielding dephospho-CoA (dPCoA) and pyrophosphate. This Paraburkholderia phymatum (strain DSM 17167 / CIP 108236 / LMG 21445 / STM815) (Burkholderia phymatum) protein is Phosphopantetheine adenylyltransferase.